The primary structure comprises 91 residues: MASTQPKNDAKSTEPKPEQPVTEKKTAVLEEDDEFEDFPVDDWEAEDTEAAKGNNEAKHLWEESWDDDDTSDDFSAQLKEELKKVEAAKKR.

The disordered stretch occupies residues Met1–Asp73. Over residues Asn8–Val28 the composition is skewed to basic and acidic residues. Acidic residues-rich tracts occupy residues Leu29–Thr48 and Glu63–Asp72.

Belongs to the DSS1/SEM1 family. In terms of assembly, part of the 26S proteasome.

Subunit of the 26S proteasome which plays a role in ubiquitin-dependent proteolysis. The polypeptide is Putative 26S proteasome complex subunit sem-1 (sem-1) (Neurospora crassa (strain ATCC 24698 / 74-OR23-1A / CBS 708.71 / DSM 1257 / FGSC 987)).